The sequence spans 275 residues: Collectin-10 (275 aa).

An N-terminal signal peptide occupies residues 1–25 (MKYGKLWPIGVSVLGVIALHVRVLS). The N-linked (GlcNAc...) asparagine glycan is linked to Asn30. The tract at residues 39–76 (THTILPGPKGDDGEAGDTGVLGKLGKDGPKGQKGNKGI) is disordered. Positions 51 to 110 (GEAGDTGVLGKLGKDGPKGQKGNKGIIGDSGDLGLIGKIGPIGSKGDKGHKGLPGLPGGK) constitute a Collagen-like domain. The C-type lectin domain occupies 153–269 (TDEKYYYIVR…CSLTIYFVCE (117 aa)). Disulfide bonds link Cys174–Cys268 and Cys246–Cys260.

Belongs to the COLEC10/COLEC11 family.

Its subcellular location is the secreted. In terms of biological role, lectin that binds to various sugars: galactose &gt; mannose = fucose &gt; N-acetylglucosamine &gt; N-acetylgalactosamine. The polypeptide is Collectin-10 (colec10) (Xenopus tropicalis (Western clawed frog)).